We begin with the raw amino-acid sequence, 548 residues long: BTB/POZ domain-containing protein At5g17580 (548 aa).

A BTB domain is found at 7 to 74; that stretch reads SDLHINVKGV…CNGSEFKFTS (68 aa). Residues 180–442 enclose the NPH3 domain; the sequence is DWKSEDLITI…VNVLCVSQLQ (263 aa). Tyrosine 383 is modified (phosphotyrosine). Positions 442–493 form a coiled coil; that stretch reads QIRDTVAKEIKGMEEKVDEEEEEEIEVSSDEDEMEKMSNKLLGLEIENDECV.

Belongs to the NPH3 family.

It functions in the pathway protein modification; protein ubiquitination. In terms of biological role, may act as a substrate-specific adapter of an E3 ubiquitin-protein ligase complex (CUL3-RBX1-BTB) which mediates the ubiquitination and subsequent proteasomal degradation of target proteins. The protein is BTB/POZ domain-containing protein At5g17580 of Arabidopsis thaliana (Mouse-ear cress).